Reading from the N-terminus, the 1692-residue chain is Adenylate cyclase (1692 aa).

Disordered stretches follow at residues 1–22 (MDQS…FKTG) and 103–142 (SLSD…YKEN). Positions 120 to 132 (ESSEKSEVPRDTR) are enriched in basic and acidic residues. Residues 174–195 (FTNLTFPEPISDDSDSVEFQRD) are required for interaction with gpa2. The Ras-associating domain occupies 292-380 (KEFFLRVYRD…SDEEINEEDN (89 aa)). LRR repeat units lie at residues 430–450 (ELIS…DFME), 454–474 (KLKR…PITA), 477–498 (QLEV…IFSG), 503–524 (SLKE…TRYL), 526–547 (NLTY…ITEL), 549–570 (QLET…IGSL), 572–594 (KLKH…IGLL), 596–617 (NLET…SECP), 618–639 (KLNS…NPSA), 660–681 (NLVY…VIET), 684–705 (NVET…ISAM), 707–729 (NLKY…GKLK), 730–751 (HLVH…VWQV), 753–774 (SLKV…VATS), 783–805 (QLKI…EFVM), 807–827 (TVEE…TALE), 831–852 (CLKV…FFQN), 855–876 (DLKH…STAQ), 878–899 (LLET…EALS), 901–922 (SLRF…KAEK), and 930–951 (QLEY…EDTN). Positions 995–1275 (RYGVCGYLSR…KNVLVVIVEL (281 aa)) constitute a PPM-type phosphatase domain. Residues 1332–1469 (AMVFTDIKNS…PVVNRTSRVV (138 aa)) enclose the Guanylate cyclase domain. Residues Asp-1337 and Asp-1380 each contribute to the Mg(2+) site. 2 residues coordinate Mn(2+): Asp-1337 and Asp-1380. Residues 1585 to 1597 (SDSKSVHGEEGGS) show a composition bias toward basic and acidic residues. The segment at 1585–1614 (SDSKSVHGEEGGSGKRSVSSLRNVSPSEST) is disordered. Residues 1600 to 1614 (RSVSSLRNVSPSEST) are compositionally biased toward polar residues.

It belongs to the adenylyl cyclase class-3 family. In terms of assembly, interacts (via N-terminus) with gpa2; the interaction is direct and serves to activate adenylate cyclase and cAMP-PKA signaling, to repress sexual development and gluconeogenesis. Interacts with git1. Requires Mn(2+) as cofactor.

The protein resides in the cytoplasm. The catalysed reaction is ATP = 3',5'-cyclic AMP + diphosphate. Activated by binding G protein gpa2. Activated by git1. In contrast to yeast cyclase, S.pombe cyclase is not likely to be regulated by RAS proteins. In terms of biological role, acts in glucose-induced cAMP signaling by catalyzing the synthesis of the second messenger, cAMP to activate PKA signaling and repress sexual development and gluconeogenesis. This Schizosaccharomyces pombe (strain 972 / ATCC 24843) (Fission yeast) protein is Adenylate cyclase.